Consider the following 274-residue polypeptide: MAIVKCKPTSPGRRFVVKVVNKELHKGAPHAPLLEKKSKSGGRNNNGRITTRHVGGGHKQHYRLVDFRRNDKDGIPATVERIEYDPNRTAHIALLCYADGERRYIIAPKGVSAGDQLIAGALAPIKAGNSLQLRNIPVGSTIHGVELKPGKGAQIARSAGASAQLIARDGVYVTLRLRSGEMRKVLAECRATLGEVSNSEHSLRSLGKAGAKRWRGVRPTVRGVAMNPVDHPHGGGEGRTSGGRHPVSPWGFPTKGAKTRGNKRTDNMIVRRRK.

Disordered stretches follow at residues 28-55 (APHAPLLEKKSKSGGRNNNGRITTRHVG) and 224-274 (VAMN…RRRK).

Belongs to the universal ribosomal protein uL2 family. In terms of assembly, part of the 50S ribosomal subunit. Forms a bridge to the 30S subunit in the 70S ribosome.

Functionally, one of the primary rRNA binding proteins. Required for association of the 30S and 50S subunits to form the 70S ribosome, for tRNA binding and peptide bond formation. It has been suggested to have peptidyltransferase activity; this is somewhat controversial. Makes several contacts with the 16S rRNA in the 70S ribosome. This Pseudomonas putida (strain GB-1) protein is Large ribosomal subunit protein uL2.